The chain runs to 223 residues: Transmembrane protein 114 (223 aa).

Residues 7–27 (GLAGAAALTGALSFVLLAAAI) traverse the membrane as a helical segment. Residues Asn-55 and Asn-89 are each glycosylated (N-linked (GlcNAc...) asparagine). The next 3 membrane-spanning stretches (helical) occupy residues 106-126 (FVILLPLSLILMVFGGMTGFL), 134-154 (LLLLLTGILFLFGAMVTLAGI), and 189-209 (LALGWISFIAELLTGAAFLAA).

This sequence belongs to the PMP-22/EMP/MP20 family.

The protein resides in the cell junction. Its subcellular location is the tight junction. It is found in the lateral cell membrane. It localises to the apical cell membrane. The chain is Transmembrane protein 114 from Homo sapiens (Human).